Consider the following 519-residue polypeptide: Chloroethene reductive dehalogenase (519 aa).

A signal peptide (tat-type signal) is located at residues 1-43; the sequence is MSKFHKTISRRDFMKGLGLAGAGIGAVAASAPVFHDIDELVSS. 4Fe-4S ferredoxin-type domains lie at 388–420 and 435–465; these read PTPPIDAGMFEFCKTCYICRDVCVSGGVHQEDE and LGYRTDWSGCHNQCGMCQSSCPFTYLGLENA. [4Fe-4S] cluster contacts are provided by cysteine 400, cysteine 403, cysteine 406, cysteine 410, cysteine 444, cysteine 448, cysteine 451, and cysteine 455.

Belongs to the PceA family. [4Fe-4S] cluster serves as cofactor. It depends on corrinoid as a cofactor. Predicted to be exported by the Tat system. The position of the signal peptide cleavage has been experimentally proven.

Its subcellular location is the cell membrane. It carries out the reaction chloroethene + AH2 = ethene + chloride + A + H(+). The enzyme catalyses (Z)-1,2-dichloroethene + AH2 = chloroethene + chloride + A + H(+). The catalysed reaction is 1,1-dichloroethene + AH2 = chloroethene + chloride + A + H(+). Catalyzes the reductive dechlorination of chloroethene (or vinyl chloride, VC) to ethene. Can also reduce all dichloroethene (DCE) isomers, but not tetrachloroethene (PCE) or trichloroethene (TCE), at high rates. Reduced methyl viologen can act as the artificial electron donor. This is Chloroethene reductive dehalogenase from Dehalococcoides mccartyi (strain VS).